The chain runs to 216 residues: Somatotropin (216 aa).

An N-terminal signal peptide occupies residues 1–26 (MAASPRNSVLLAFALLCLPWPQEVGA). H45 contacts Zn(2+). Residues C78 and C189 are joined by a disulfide bond. Position 131 is a phosphoserine (S131). E198 is a Zn(2+) binding site. C206 and C214 are disulfide-bonded.

It belongs to the somatotropin/prolactin family.

It is found in the secreted. Functionally, plays an important role in growth control. Its major role in stimulating body growth is to stimulate the liver and other tissues to secrete IGF1. It stimulates both the differentiation and proliferation of myoblasts. It also stimulates amino acid uptake and protein synthesis in muscle and other tissues. The chain is Somatotropin (GH1) from Canis lupus familiaris (Dog).